We begin with the raw amino-acid sequence, 268 residues long: Leucyl/phenylalanyl-tRNA--protein transferase (268 aa).

The protein belongs to the L/F-transferase family.

The protein resides in the cytoplasm. It catalyses the reaction N-terminal L-lysyl-[protein] + L-leucyl-tRNA(Leu) = N-terminal L-leucyl-L-lysyl-[protein] + tRNA(Leu) + H(+). The catalysed reaction is N-terminal L-arginyl-[protein] + L-leucyl-tRNA(Leu) = N-terminal L-leucyl-L-arginyl-[protein] + tRNA(Leu) + H(+). The enzyme catalyses L-phenylalanyl-tRNA(Phe) + an N-terminal L-alpha-aminoacyl-[protein] = an N-terminal L-phenylalanyl-L-alpha-aminoacyl-[protein] + tRNA(Phe). Its function is as follows. Functions in the N-end rule pathway of protein degradation where it conjugates Leu, Phe and, less efficiently, Met from aminoacyl-tRNAs to the N-termini of proteins containing an N-terminal arginine or lysine. This is Leucyl/phenylalanyl-tRNA--protein transferase from Zymomonas mobilis subsp. mobilis (strain ATCC 31821 / ZM4 / CP4).